Consider the following 440-residue polypeptide: Oligodendrocyte-myelin glycoprotein (440 aa).

The N-terminal stretch at 1–24 (MEYQILKMSLCLFILLFLTPGILC) is a signal peptide. The LRRNT domain maps to 25–55 (ICPLQCICTERHRHVDCSGRNLSTLPSGLQE). 2 N-linked (GlcNAc...) asparagine glycosylation sites follow: Asn-45 and Asn-61. 8 LRR repeats span residues 56–77 (NIIHLNLSYNHFTDLHNQLTQY), 79–100 (NLRTLDISNNRLESLPAHLPRS), 101–121 (LWNMSAANNNIKLLDKSDTAY), 124–145 (NLKYLDVSKNMLEKVVLIKNTL), 147–168 (SLEVLNLSSNKLWTVPTNMPSK), 169–189 (LHIVDLSNNSLTQILPGTLIN), 192–213 (NLTHLYLHNNKFTFIPDQSFDQ), and 216–239 (QLQEITLYNNRWSCDHKQNITYLL). N-linked (GlcNAc...) asparagine glycosylation occurs at Asn-103. Residues Asn-152, Asn-176, Asn-189, Asn-192, and Asn-234 are each glycosylated (N-linked (GlcNAc...) asparagine). Ser/Thr-rich repeat units lie at residues 229 to 270 (CDHK…YPTP), 271 to 292 (SGFTSSLFTVSGMQTVDTINSL), 293 to 335 (SVVT…VPYP), 336 to 377 (EDTS…SPTP), and 378 to 416 (MTLSITSGMPNNFSEMPQQSTTLNLWREETTTNVKTPLP). Residues Asn-364 and Asn-389 are each glycosylated (N-linked (GlcNAc...) asparagine). A lipid anchor (GPI-anchor amidated serine) is attached at Ser-417. Positions 418–440 (VANAWKVNASFLLLLNVVVMLAV) are cleaved as a propeptide — removed in mature form. Residue Asn-425 is glycosylated (N-linked (GlcNAc...) asparagine).

As to quaternary structure, binds to RTN4R. In terms of processing, O-glycosylated in its Ser/Thr-rich repeat domain. As to expression, oligodendrocytes and myelin of the central nervous system.

The protein resides in the cell membrane. Functionally, cell adhesion molecule contributing to the interactive process required for myelination in the central nervous system. In Homo sapiens (Human), this protein is Oligodendrocyte-myelin glycoprotein (OMG).